Consider the following 300-residue polypeptide: Fluorinase (300 aa).

S-adenosyl-L-methionine-binding positions include aspartate 16, 21–23, tyrosine 77, serine 158, aspartate 211, asparagine 216, 270–271, and 278–280; these read DDS, SR, and RNA.

The protein belongs to the SAM hydrolase / SAM-dependent halogenase family. As to quaternary structure, homohexamer.

The enzyme catalyses fluoride + S-adenosyl-L-methionine = 5'-deoxy-5'-fluoroadenosine + L-methionine. It catalyses the reaction chloride + S-adenosyl-L-methionine = 5'-chloro-5'-deoxyadenosine + L-methionine. Its activity is regulated as follows. Activity is severely inhibited by 1 mM Cu(2+) or Zn(2+). Its function is as follows. Catalyzes the formation of a C-F bond by combining S-adenosyl-L-methionine (SAM) and fluoride to generate 5'-fluoro-5'-deoxyadenosine (5'-FDA) and L-methionine. Probably involved in fluoroacetate (FAc) and 4-fluorothreonine (4-FT) biosynthesis. In vitro, can also catalyze the conversion of chloride and SAM to 5'-chloro-5'-deoxyadenosine (5'-CIDA) and L-methionine in the presence of L-amino acid oxidase. This Nocardia brasiliensis (strain ATCC 700358 / HUJEG-1) protein is Fluorinase.